Consider the following 310-residue polypeptide: Ribonuclease Z (310 aa).

His-60, His-62, Asp-64, His-65, His-140, Asp-209, and His-269 together coordinate Zn(2+). Asp-64 (proton acceptor) is an active-site residue.

It belongs to the RNase Z family. Homodimer. It depends on Zn(2+) as a cofactor.

The catalysed reaction is Endonucleolytic cleavage of RNA, removing extra 3' nucleotides from tRNA precursor, generating 3' termini of tRNAs. A 3'-hydroxy group is left at the tRNA terminus and a 5'-phosphoryl group is left at the trailer molecule.. Its function is as follows. Zinc phosphodiesterase, which displays some tRNA 3'-processing endonuclease activity. Probably involved in tRNA maturation, by removing a 3'-trailer from precursor tRNA. The sequence is that of Ribonuclease Z from Methanococcus maripaludis (strain C7 / ATCC BAA-1331).